Reading from the N-terminus, the 476-residue chain is Adenosylhomocysteinase (476 aa).

Residues threonine 61, aspartate 140, and glutamate 200 each contribute to the substrate site. 201–203 (TTT) is a binding site for NAD(+). Residues lysine 230 and aspartate 234 each contribute to the substrate site. NAD(+) is bound by residues asparagine 235, 264–269 (GYGDVG), glutamate 287, asparagine 322, 343–345 (IGH), and asparagine 389.

Belongs to the adenosylhomocysteinase family. NAD(+) is required as a cofactor.

Its subcellular location is the cytoplasm. The catalysed reaction is S-adenosyl-L-homocysteine + H2O = L-homocysteine + adenosine. It functions in the pathway amino-acid biosynthesis; L-homocysteine biosynthesis; L-homocysteine from S-adenosyl-L-homocysteine: step 1/1. May play a key role in the regulation of the intracellular concentration of adenosylhomocysteine. The sequence is that of Adenosylhomocysteinase from Acidovorax sp. (strain JS42).